We begin with the raw amino-acid sequence, 147 residues long: Large ribosomal subunit protein uL23A (147 aa).

A compositionally biased stretch (low complexity) spans 1 to 10 (MAPSAPAKTA). Residues 1 to 29 (MAPSAPAKTAKALDAKKKVVKGKRTTHRR) are disordered. Positions 18 to 29 (KVVKGKRTTHRR) are enriched in basic residues.

The protein belongs to the universal ribosomal protein uL23 family.

In terms of biological role, this protein binds to a specific region on the 26S rRNA. This chain is Large ribosomal subunit protein uL23A, found in Caenorhabditis elegans.